We begin with the raw amino-acid sequence, 281 residues long: Bifunctional protein FolD (281 aa).

NADP(+) is bound by residues 164-166 (GAS), isoleucine 189, and isoleucine 230.

This sequence belongs to the tetrahydrofolate dehydrogenase/cyclohydrolase family. Homodimer.

It carries out the reaction (6R)-5,10-methylene-5,6,7,8-tetrahydrofolate + NADP(+) = (6R)-5,10-methenyltetrahydrofolate + NADPH. It catalyses the reaction (6R)-5,10-methenyltetrahydrofolate + H2O = (6R)-10-formyltetrahydrofolate + H(+). Its pathway is one-carbon metabolism; tetrahydrofolate interconversion. Catalyzes the oxidation of 5,10-methylenetetrahydrofolate to 5,10-methenyltetrahydrofolate and then the hydrolysis of 5,10-methenyltetrahydrofolate to 10-formyltetrahydrofolate. The protein is Bifunctional protein FolD of Sulfurovum sp. (strain NBC37-1).